Reading from the N-terminus, the 362-residue chain is MAPMGIRLSPLGVAVFCLLGLGVLYHLYSGFLAGRFSLFGLGGEPGGGAAGPAGPAASADGGTVDLREMLAVSVLAAVRGGEEVRRVRESNVLHEKSKGKTREGADDKMTSGDVLSNRKMFYLLKTAFPSVQINTEEHVDASDQEVILWDRKIPEDILKEIATPQEVPAESVTVWIDPLDATQEYTEDLRKYVTTMVCVAVNGKPVLGVIHKPFSEYTAWAMVDGGSNVKARTSYNEKTPRIVVSRSHSGMVKQVALQTFGNQTTIIPAGGAGYKVLALLDVPDKSQEKADLYIHVTYIKKWDICAGNAILKALGGHMTTLSGEEISYTGSDGIEGGLLASIRMNHQALVRKLPDLEKTGHK.

At methionine 1 the chain carries N-acetylmethionine. The Cytoplasmic portion of the chain corresponds to 1-12; sequence MAPMGIRLSPLG. Residues 13-33 traverse the membrane as a helical segment; that stretch reads VAVFCLLGLGVLYHLYSGFLA. Topologically, residues 34–362 are lumenal; the sequence is GRFSLFGLGG…LPDLEKTGHK (329 aa). A disordered region spans residues 88–109; the sequence is RESNVLHEKSKGKTREGADDKM. Catalysis depends on aspartate 113, which acts as the Proton acceptor. Mg(2+) contacts are provided by glutamate 136, aspartate 177, leucine 179, and aspartate 180. Threonine 182 (proton acceptor) is an active-site residue. Serine 245 and histidine 248 together coordinate AMP. Asparagine 262 is a glycosylation site (N-linked (GlcNAc...) asparagine). The AMP site is built by glycine 271 and lysine 275. Mg(2+) is bound at residue aspartate 303.

It belongs to the inositol monophosphatase superfamily. Mg(2+) serves as cofactor. Post-translationally, contains N-linked glycan resistant to endoglycosydase H.

The protein resides in the golgi apparatus. The protein localises to the trans-Golgi network membrane. The catalysed reaction is adenosine 3',5'-bisphosphate + H2O = AMP + phosphate. Its pathway is sulfur metabolism. Strongly inhibited by lithium. Its function is as follows. Exhibits 3'-nucleotidase activity toward adenosine 3',5'-bisphosphate (PAP), namely hydrolyzes adenosine 3',5'-bisphosphate into adenosine 5'-monophosphate (AMP) and a phosphate. May play a role in the formation of skeletal elements derived through endochondral ossification, possibly by clearing adenosine 3',5'-bisphosphate produced by Golgi sulfotransferases during glycosaminoglycan sulfation. Has no activity toward 3'-phosphoadenosine 5'-phosphosulfate (PAPS) or inositol phosphate (IP) substrates including I(1)P, I(1,4)P2, I(1,3,4)P3, I(1,4,5)P3 and I(1,3,4,5)P4. The sequence is that of Golgi-resident adenosine 3',5'-bisphosphate 3'-phosphatase (BPNT2) from Bos taurus (Bovine).